The following is a 180-amino-acid chain: NAD(P)H-quinone oxidoreductase subunit I, chloroplastic (180 aa).

2 4Fe-4S ferredoxin-type domains span residues 55–84 (GRIH…VHWR) and 95–124 (LNYS…MTEE). [4Fe-4S] cluster-binding residues include cysteine 64, cysteine 67, cysteine 70, cysteine 74, cysteine 104, cysteine 107, cysteine 110, and cysteine 114.

It belongs to the complex I 23 kDa subunit family. As to quaternary structure, NDH is composed of at least 16 different subunits, 5 of which are encoded in the nucleus. [4Fe-4S] cluster serves as cofactor.

The protein localises to the plastid. Its subcellular location is the chloroplast thylakoid membrane. It carries out the reaction a plastoquinone + NADH + (n+1) H(+)(in) = a plastoquinol + NAD(+) + n H(+)(out). It catalyses the reaction a plastoquinone + NADPH + (n+1) H(+)(in) = a plastoquinol + NADP(+) + n H(+)(out). In terms of biological role, NDH shuttles electrons from NAD(P)H:plastoquinone, via FMN and iron-sulfur (Fe-S) centers, to quinones in the photosynthetic chain and possibly in a chloroplast respiratory chain. The immediate electron acceptor for the enzyme in this species is believed to be plastoquinone. Couples the redox reaction to proton translocation, and thus conserves the redox energy in a proton gradient. The protein is NAD(P)H-quinone oxidoreductase subunit I, chloroplastic of Calycanthus floridus var. glaucus (Eastern sweetshrub).